The following is a 568-amino-acid chain: DNA mismatch repair protein MutL (568 aa).

Belongs to the DNA mismatch repair MutL/HexB family.

This protein is involved in the repair of mismatches in DNA. It is required for dam-dependent methyl-directed DNA mismatch repair. May act as a 'molecular matchmaker', a protein that promotes the formation of a stable complex between two or more DNA-binding proteins in an ATP-dependent manner without itself being part of a final effector complex. In Thermosipho africanus (strain TCF52B), this protein is DNA mismatch repair protein MutL.